The chain runs to 490 residues: ATP synthase subunit beta, plastid (490 aa).

ATP is bound at residue Gly-170–Thr-177.

Belongs to the ATPase alpha/beta chains family. F-type ATPases have 2 components, CF(1) - the catalytic core - and CF(0) - the membrane proton channel. CF(1) has five subunits: alpha(3), beta(3), gamma(1), delta(1), epsilon(1). CF(0) has four main subunits: a(1), b(1), b'(1) and c(9-12).

Its subcellular location is the plastid membrane. It carries out the reaction ATP + H2O + 4 H(+)(in) = ADP + phosphate + 5 H(+)(out). Its function is as follows. Produces ATP from ADP in the presence of a proton gradient across the membrane. The catalytic sites are hosted primarily by the beta subunits. The polypeptide is ATP synthase subunit beta, plastid (Cuscuta exaltata (Tall dodder)).